The sequence spans 601 residues: 66 kDa stress protein (601 aa).

10 WD repeats span residues 56 to 95, 100 to 143, 145 to 184, 187 to 226, 233 to 272, 318 to 357, 435 to 478, 483 to 522, 526 to 565, and 569 to 600; these read EHAQ…HPLK, VLSG…GEIT, HSKA…FKHA, EHTR…KVGA, AHAL…LTTF, GHNK…AVPI, ASTT…LSEQ, GHRG…IKVE, YHNA…KHIA, and AHRG…WTIK.

The protein belongs to the WD repeat AIP1 family.

Its function is as follows. Associated with the process of cyst formation. This Physarum polycephalum (Slime mold) protein is 66 kDa stress protein.